The following is a 406-amino-acid chain: Acetylornithine aminotransferase (406 aa).

Pyridoxal 5'-phosphate-binding positions include 113 to 114 and F145; that span reads GT. A N(2)-acetyl-L-ornithine-binding site is contributed by R148. Position 233–236 (233–236) interacts with pyridoxal 5'-phosphate; sequence DEIQ. The residue at position 262 (K262) is an N6-(pyridoxal phosphate)lysine. A N(2)-acetyl-L-ornithine-binding site is contributed by S290. T291 contributes to the pyridoxal 5'-phosphate binding site.

This sequence belongs to the class-III pyridoxal-phosphate-dependent aminotransferase family. ArgD subfamily. In terms of assembly, homodimer. Pyridoxal 5'-phosphate is required as a cofactor.

The protein localises to the cytoplasm. The enzyme catalyses N(2)-acetyl-L-ornithine + 2-oxoglutarate = N-acetyl-L-glutamate 5-semialdehyde + L-glutamate. Its pathway is amino-acid biosynthesis; L-arginine biosynthesis; N(2)-acetyl-L-ornithine from L-glutamate: step 4/4. The polypeptide is Acetylornithine aminotransferase (Leptospira interrogans serogroup Icterohaemorrhagiae serovar Lai (strain 56601)).